The primary structure comprises 349 residues: tRNA-specific 2-thiouridylase MnmA (349 aa).

ATP is bound by residues 6 to 13 and M32; that span reads LLSGGVDS. C103 acts as the Nucleophile in catalysis. A disulfide bond links C103 and C195. Residue G127 coordinates ATP. An interaction with tRNA region spans residues 145-147; sequence KDQ. Catalysis depends on C195, which acts as the Cysteine persulfide intermediate.

This sequence belongs to the MnmA/TRMU family.

Its subcellular location is the cytoplasm. The catalysed reaction is S-sulfanyl-L-cysteinyl-[protein] + uridine(34) in tRNA + AH2 + ATP = 2-thiouridine(34) in tRNA + L-cysteinyl-[protein] + A + AMP + diphosphate + H(+). Catalyzes the 2-thiolation of uridine at the wobble position (U34) of tRNA, leading to the formation of s(2)U34. The chain is tRNA-specific 2-thiouridylase MnmA from Pseudothermotoga lettingae (strain ATCC BAA-301 / DSM 14385 / NBRC 107922 / TMO) (Thermotoga lettingae).